A 506-amino-acid polypeptide reads, in one-letter code: Lysine--tRNA ligase (506 aa).

E415 and E422 together coordinate Mg(2+).

Belongs to the class-II aminoacyl-tRNA synthetase family. Homodimer. It depends on Mg(2+) as a cofactor.

It localises to the cytoplasm. It catalyses the reaction tRNA(Lys) + L-lysine + ATP = L-lysyl-tRNA(Lys) + AMP + diphosphate. This Buchnera aphidicola subsp. Acyrthosiphon pisum (strain APS) (Acyrthosiphon pisum symbiotic bacterium) protein is Lysine--tRNA ligase (lysS).